The chain runs to 594 residues: Type IV inositol polyphosphate 5-phosphatase 7 (594 aa).

Residues 246 to 300 (FRCGHRPSDYSRRPSDYSRPSDYYSRPSNYSRPSDVSRWGSSDDDNGPGDSPSTF) form a disordered region. Basic and acidic residues predominate over residues 251–261 (RPSDYSRRPSD). Residues 262–279 (YSRPSDYYSRPSNYSRPS) are compositionally biased toward low complexity. Catalytic stretches follow at residues 435–450 (DRVI…IALS) and 515–530 (KRRT…WHGE).

This sequence belongs to the inositol polyphosphate 5-phosphatase family. As to expression, broadly expressed in emerging organs. Mostly localized in procambium of growing organs. Restricted to vascular differentiating cells of young organs.

It is found in the nucleus. The protein resides in the cell membrane. It catalyses the reaction a 1,2-diacyl-sn-glycero-3-phospho-(1D-myo-inositol-4,5-bisphosphate) + H2O = a 1,2-diacyl-sn-glycero-3-phospho-(1D-myo-inositol 4-phosphate) + phosphate. It carries out the reaction a 1,2-diacyl-sn-glycero-3-phospho-(1D-myo-inositol-3,4,5-trisphosphate) + H2O = a 1,2-diacyl-sn-glycero-3-phospho-(1D-myo-inositol-3,4-bisphosphate) + phosphate. Its function is as follows. Has phosphatase activity toward PtdIns(4,5)P2 and at a lower extent toward PtdIns(3,4,5)P3 but not toward Ins(1,4,5)P3. Acts redundantly with CVP2 for maintaining vascular continuity. Regulates phosphoinositide-dependent VAN3 localization. Functions in salt stress response by regulating reactive oxygen species (ROS) production and stress-responsive genes expression. The protein is Type IV inositol polyphosphate 5-phosphatase 7 of Arabidopsis thaliana (Mouse-ear cress).